The chain runs to 238 residues: Probable transcriptional regulatory protein SMU_1789c (238 aa).

It belongs to the TACO1 family. YeeN subfamily.

The protein localises to the cytoplasm. This Streptococcus mutans serotype c (strain ATCC 700610 / UA159) protein is Probable transcriptional regulatory protein SMU_1789c.